Consider the following 42-residue polypeptide: Profilin (42 aa).

This sequence belongs to the profilin family. Occurs in many kinds of cells as a complex with monomeric actin in a 1:1 ratio.

It localises to the cytoplasm. The protein resides in the cytoskeleton. Binds to actin and affects the structure of the cytoskeleton. At high concentrations, profilin prevents the polymerization of actin, whereas it enhances it at low concentrations. This Plantago lanceolata (English plantain) protein is Profilin.